The following is a 1152-amino-acid chain: P3N-PIPO polyprotein (1152 aa).

In terms of domain architecture, Peptidase S30 spans 292-437; it reads VMNQQTLMAF…HSITHRMVQY (146 aa). Active-site for P1 proteinase activity residues include His345, Asp354, and Ser388. The short motif at 489 to 492 is the Involved in interaction with stylet and aphid transmission element; the sequence is KITC. Residues 747–749 carry the Involved in virions binding and aphid transmission motif; that stretch reads PTK. The Peptidase C6 domain maps to 773-895; the sequence is MFVTKDGYCY…ESEMQHYRVG (123 aa). Active-site for helper component proteinase activity residues include Cys781 and His854.

This sequence belongs to the potyviridae P3N-PIPO polyprotein family. In terms of assembly, interacts (via PIPO domain) with host PCaP1 protein; this interaction may help to anchor the movement complex to the plasma membrane from which the complex could move to the plasmodesmata. Potyviral RNA is expressed as two polyproteins which undergo post-translational proteolytic processing. Genome polyprotein is processed by NIa-pro, P1 and HC-pro proteinases resulting in the production of at least ten individual proteins. P3N-PIPO is cleaved by P1 and HC-pro proteinases resulting in the production of three individual proteins. The P1 proteinase and the HC-pro cleave only their respective C-termini autocatalytically.

The protein resides in the host cell junction. Its subcellular location is the host plasmodesma. The catalysed reaction is Hydrolyzes a Gly-|-Gly bond at its own C-terminus, commonly in the sequence -Tyr-Xaa-Val-Gly-|-Gly, in the processing of the potyviral polyprotein.. Functionally, required for aphid transmission and also has proteolytic activity. Only cleaves a Gly-Gly dipeptide at its own C-terminus. Interacts with virions and aphid stylets. Acts as a suppressor of RNA-mediated gene silencing, also known as post-transcriptional gene silencing (PTGS), a mechanism of plant viral defense that limits the accumulation of viral RNAs. May have RNA-binding activity. In terms of biological role, allows efficient cell to cell propagation, by bypassing the host cell wall barrier. Transports viral genome to neighboring plant cells directly through plasmosdesmata, without any budding. This Lettuce mosaic virus (strain 0 / isolate French) (LMV) protein is P3N-PIPO polyprotein.